The chain runs to 241 residues: Gamma-interferon-inducible lysosomal thiol reductase-like protein (241 aa).

The signal sequence occupies residues methionine 1–glycine 18. N-linked (GlcNAc...) asparagine glycans are attached at residues asparagine 105 and asparagine 152. A helical membrane pass occupies residues serine 218 to valine 235.

It belongs to the GILT family. Salivary gland (at protein level). Low-level expression in midgut (at protein level). Expressed in head and leg tissues. Ovary. Fat body. As to expression, (Microbial infection) Detected with Plasmodium berghei sporozoites isolated from the saliva of infected Anopheles gambiae mosquitoes (at protein level).

It is found in the membrane. Its function is as follows. Required for normal development of ovary and testis. (Microbial infection) Interacts with the surface of Plasmodium berghei sporozoites. Reduces P.berghei sporozoite cell traversal activity and transmission. Limits the motility of P.berghei sporozoites. Decreases the levels of host liver infection by P.berghei sporozoites. Does not affect P.berghei sporozoite viability. Indirectly promotes P.berghei survival in mosquitoes by influencing ovarian development and the subsequent production of 20-hydroxyecdysone and vitellogenin, which, in turn, modulates TEP1-dependent parasite killing. Promotes P.berghei infection in mosquitoes, most likely impacting the oocyst stage of parasite development. Functionally, (Microbial infection) Promotes Plasmodium falciparum survival in mosquitoes. This chain is Gamma-interferon-inducible lysosomal thiol reductase-like protein, found in Anopheles gambiae (African malaria mosquito).